Consider the following 267-residue polypeptide: Matrilysin (267 aa).

Residues 1–17 form the signal peptide; it reads MRLTVLCAVCLLPGSLA. Positions 18–94 are cleaved as a propeptide — activation peptide; sequence LPLPQEAGGM…PRCGVPDVAE (77 aa). Positions 85–92 match the Cysteine switch motif; sequence PRCGVPDV. Zn(2+) is bound at residue Cys-87. Position 153 (Asp-153) interacts with Ca(2+). The Zn(2+) site is built by His-163 and Asp-165. Ca(2+) contacts are provided by Asp-170, Gly-171, Gly-173, and Thr-175. Position 178 (His-178) interacts with Zn(2+). Ca(2+) is bound by residues Gly-185, Gly-187, and Asp-189. Position 191 (His-191) interacts with Zn(2+). Positions 193 and 196 each coordinate Ca(2+). His-214 contacts Zn(2+). The active site involves Glu-215. Residues His-218 and His-224 each coordinate Zn(2+).

Belongs to the peptidase M10A family. Ca(2+) serves as cofactor. Zn(2+) is required as a cofactor.

Its subcellular location is the secreted. It localises to the extracellular space. The protein localises to the extracellular matrix. The catalysed reaction is Cleavage of 14-Ala-|-Leu-15 and 16-Tyr-|-Leu-17 in B chain of insulin. No action on collagen types I, II, IV, V. Cleaves gelatin chain alpha2(I) &gt; alpha1(I).. Degrades casein, gelatins of types I, III, IV, and V, and fibronectin. Activates procollagenase. This chain is Matrilysin (MMP7), found in Homo sapiens (Human).